Consider the following 261-residue polypeptide: Ribosomal RNA small subunit methyltransferase J (261 aa).

S-adenosyl-L-methionine is bound by residues 109 to 110 (RD), 125 to 126 (ER), and Asp179.

This sequence belongs to the methyltransferase superfamily. RsmJ family.

It localises to the cytoplasm. The enzyme catalyses guanosine(1516) in 16S rRNA + S-adenosyl-L-methionine = N(2)-methylguanosine(1516) in 16S rRNA + S-adenosyl-L-homocysteine + H(+). Specifically methylates the guanosine in position 1516 of 16S rRNA. The sequence is that of Ribosomal RNA small subunit methyltransferase J from Pseudomonas aeruginosa (strain ATCC 15692 / DSM 22644 / CIP 104116 / JCM 14847 / LMG 12228 / 1C / PRS 101 / PAO1).